The primary structure comprises 363 residues: Phosphoserine aminotransferase (363 aa).

Arg-42 serves as a coordination point for L-glutamate. Residues 76 to 77, Trp-101, Thr-151, Asp-170, and Gln-193 contribute to the pyridoxal 5'-phosphate site; that span reads AS. Position 194 is an N6-(pyridoxal phosphate)lysine (Lys-194). 234 to 235 lines the pyridoxal 5'-phosphate pocket; that stretch reads NT.

The protein belongs to the class-V pyridoxal-phosphate-dependent aminotransferase family. SerC subfamily. As to quaternary structure, homodimer. Pyridoxal 5'-phosphate is required as a cofactor.

It is found in the cytoplasm. The enzyme catalyses O-phospho-L-serine + 2-oxoglutarate = 3-phosphooxypyruvate + L-glutamate. It carries out the reaction 4-(phosphooxy)-L-threonine + 2-oxoglutarate = (R)-3-hydroxy-2-oxo-4-phosphooxybutanoate + L-glutamate. It functions in the pathway amino-acid biosynthesis; L-serine biosynthesis; L-serine from 3-phospho-D-glycerate: step 2/3. In terms of biological role, catalyzes the reversible conversion of 3-phosphohydroxypyruvate to phosphoserine and of 3-hydroxy-2-oxo-4-phosphonooxybutanoate to phosphohydroxythreonine. This chain is Phosphoserine aminotransferase, found in Listeria innocua serovar 6a (strain ATCC BAA-680 / CLIP 11262).